The following is a 189-amino-acid chain: Ribosome-recycling factor (189 aa).

The protein belongs to the RRF family.

It localises to the cytoplasm. In terms of biological role, responsible for the release of ribosomes from messenger RNA at the termination of protein biosynthesis. May increase the efficiency of translation by recycling ribosomes from one round of translation to another. The chain is Ribosome-recycling factor from Salinibacter ruber (strain DSM 13855 / M31).